Here is a 180-residue protein sequence, read N- to C-terminus: Small ribosomal subunit protein uS4 (180 aa).

One can recognise an S4 RNA-binding domain in the interval 103-165 (RRLQTLVYKK…KNSPFAKESH (63 aa)).

Belongs to the universal ribosomal protein uS4 family. Part of the 30S ribosomal subunit. Contacts protein S5. The interaction surface between S4 and S5 is involved in control of translational fidelity.

Functionally, one of the primary rRNA binding proteins, it binds directly to 16S rRNA where it nucleates assembly of the body of the 30S subunit. Its function is as follows. With S5 and S12 plays an important role in translational accuracy. This is Small ribosomal subunit protein uS4 from Thermococcus gammatolerans (strain DSM 15229 / JCM 11827 / EJ3).